The following is a 298-amino-acid chain: HTH-type transcriptional regulator ArgP (298 aa).

In terms of domain architecture, HTH lysR-type spans 4-60; that stretch reads VDYRWVAALDAVIAQRGFERAAEKLCITQSAVSQRIKQLEKLMAQPLLVREQPPRPT. Residues 21 to 40 constitute a DNA-binding region (H-T-H motif); it reads FERAAEKLCITQSAVSQRIK.

The protein belongs to the LysR transcriptional regulatory family. In terms of assembly, homodimer.

In terms of biological role, controls the transcription of genes involved in arginine and lysine metabolism. This Photobacterium profundum (strain SS9) protein is HTH-type transcriptional regulator ArgP.